The primary structure comprises 202 residues: Endothelin-1 (202 aa).

Residues 1–25 form the signal peptide; that stretch reads MDYFPVIFSLLFVAFQGAPETAVLG. A propeptide spanning residues 26-50 is cleaved from the precursor; that stretch reads AELSPRAEKEVQSPPPSTSWRPRRS. Positions 28–47 are disordered; it reads LSPRAEKEVQSPPPSTSWRP. Cystine bridges form between Cys-53–Cys-67 and Cys-55–Cys-63. Residues 74-202 constitute a propeptide that is removed on maturation; sequence VNTPERVVPY…DQKLIHNRAH (129 aa). An endothelin-like region spans residues 110–124; the sequence is CQCAHQKDKKCWNFC.

This sequence belongs to the endothelin/sarafotoxin family.

The protein resides in the secreted. Endothelins are endothelium-derived vasoconstrictor peptides. Probable ligand for G-protein coupled receptors EDNRA and EDNRB which activates PTK2B, BCAR1, BCAR3 and, GTPases RAP1 and RHOA cascade in glomerular mesangial cells. Also binds the DEAR/FBXW7-AS1 receptor. Promotes mesenteric arterial wall remodeling via activation of ROCK signaling and subsequent colocalization of NFATC3 with F-actin filaments. NFATC3 then translocates to the nucleus where it subsequently promotes the transcription of the smooth muscle hypertrophy and differentiation marker ACTA2. The chain is Endothelin-1 (Edn1) from Rattus norvegicus (Rat).